The following is a 1166-amino-acid chain: Calcium-activated potassium channel subunit alpha-1 (1166 aa).

The segment covering 1-15 (MANGGGGGGGGGGGS) has biased composition (gly residues). Disordered regions lie at residues 1–20 (MANG…LRMS) and 30–51 (LDAS…SVHE). The Extracellular portion of the chain corresponds to 1-74 (MANGGGGGGG…VPCDSRGQRM (74 aa)). Low complexity predominate over residues 33–48 (SSSSSSSSSSSSSSSS). A helical membrane pass occupies residues 75–95 (WWAFLASSMVTFFGGLFIILL). The Cytoplasmic segment spans residues 96–166 (WRTLKYLWTV…MISAQTLTGR (71 aa)). S-palmitoyl cysteine attachment occurs at residues cysteine 106, cysteine 107, and cysteine 109. Position 139 is a phosphothreonine; by CamK2 (threonine 139). Residues 167–187 (VLVVLVFALSIGALVIYFIDS) form a helical membrane-spanning segment. Residues 188–202 (SNPIESCQNFYKDFT) are Extracellular-facing. A helical membrane pass occupies residues 203 to 223 (LQIDMAFNVFFLLYFGLRFIA). Topologically, residues 224 to 227 (ANDK) are cytoplasmic. The chain crosses the membrane as a helical span at residues 228–248 (LWFWLEVNSVVDFFTVPPVFV). At 249–252 (SVYL) the chain is on the extracellular side. Residues 253 to 273 (NRSWLGLRFLRALRLIQFSEI) form a helical; Voltage-sensor membrane-spanning segment. At 274–288 (LQFLNILKTSNSIKL) the chain is on the cytoplasmic side. Residues 289-309 (VNLLSIFISTWLTAAGFIHLV) form a helical membrane-spanning segment. Residues 310 to 323 (ENSGDPWENFQNNQ) lie on the Extracellular side of the membrane. The pore-forming intramembrane region spans 324–346 (ALTYWECVYLLMVTMSTVGYGDV). The short motif at 340–343 (TVGY) is the Selectivity for potassium element. The Extracellular segment spans residues 347-355 (YAKTTLGRL). Residues 356-376 (FMVFFILGGLAMFASYVPEII) form a helical membrane-spanning segment. The Cytoplasmic portion of the chain corresponds to 377 to 1166 (ELIGNRKKYG…KQKYVQEERL (790 aa)). In terms of domain architecture, RCK N-terminal 1 spans 395–537 (RKHIVVCGHI…WNWKEGDDAI (143 aa)). Residues glutamate 427, glutamine 450, and glutamate 452 each contribute to the Mg(2+) site. A segment S7 region spans residues 544-564 (LGFIAQSCLAQGLSTMLANLF). A segment S8 region spans residues 601–621 (LSFPTVCELCFVKLKLLMIAI). The tract at residues 665–669 (CKACH) is heme-binding motif. The disordered stretch occupies residues 689-717 (EQPSTLSPKKKQRNGGMRNSPSSSPKLMR). The residue at position 693 (threonine 693) is a Phosphothreonine. Phosphoserine occurs at positions 695, 708, and 712. The segment at 767-787 (VLSGHVVVCIFGDVSSALIGL) is segment S9. The RCK N-terminal 2 domain maps to 769-913 (SGHVVVCIFG…MDRSSPDNSP (145 aa)). Phosphothreonine is present on threonine 900. Phosphoserine is present on residues serine 908 and serine 912. Residues 933 to 955 (TELVNDTNVQFLDQDDDDDPDTE) carry the Calcium bowl motif. Residues glutamine 942, aspartate 945, aspartate 948, and aspartate 950 each coordinate Ca(2+). Positions 962–982 (FACGTAFAVSVLDSLMSATYF) are segment S10. Residues 1116 to 1141 (RASLSHSSHSSQSSSKKSSSVHSIPS) show a composition bias toward low complexity. Residues 1116-1166 (RASLSHSSHSSQSSSKKSSSVHSIPSTANRQNRPKSRESRDKQKYVQEERL) form a disordered region. The span at 1150 to 1166 (KSRESRDKQKYVQEERL) shows a compositional bias: basic and acidic residues. Phosphoserine; by PKG is present on residues serine 1151 and serine 1154.

This sequence belongs to the potassium channel family. Calcium-activated (TC 1.A.1.3) subfamily. KCa1.1/KCNMA1 sub-subfamily. Homotetramer; which constitutes the calcium-activated potassium channel. Interacts with beta subunits KCNMB1, KCNMB2, KCNMB3 and KCNMB4. Interacts with gamma subunits LRRC26, LRRC38, LRRC52 and LRRC55. Beta and gamma subunits are accessory, and modulate its activity. Interacts with RAB11B. Phosphorylated. Stimulated by PKG, but not by PKA. In smooth muscles, phosphorylation affects its activity. In terms of processing, phosphorylated. Exclusively stimulated by PKA. In smooth muscles, phosphorylation affects its activity. Post-translationally, incremental phosphorylation of Thr-139 of the KCNMA1 tetramer changes the response to ethanol from increased activation to inhibition of channel activity. Palmitoylation by ZDHHC22 and ZDHHC23 within the intracellular linker between the S0 and S1 transmembrane domains regulates localization to the plasma membrane. Depalmitoylated by LYPLA1 and LYPLAL1, leading to retard exit from the trans-Golgi network.

The protein localises to the cell membrane. The catalysed reaction is K(+)(in) = K(+)(out). Its activity is regulated as follows. Ethanol and carbon monoxide-bound heme increase channel activation. Heme inhibits channel activation. Phosphorylation of Thr-139 leads to inhibition of channel activity by ethanol. Functionally, potassium channel activated by both membrane depolarization or increase in cytosolic Ca(2+) that mediates export of K(+). It is also activated by concentration of cytosolic Mg(2+). Its activation dampens the excitatory events that elevate the cytosolic Ca(2+) concentration and/or depolarize the cell membrane. It therefore contributes to repolarization of the membrane potential. Plays a key role in controlling excitability in a number of systems, such as regulation of the contraction of smooth muscle, the tuning of hair cells in the cochlea, regulation of transmitter release, and innate immunity. In smooth muscles, its activation by high level of Ca(2+), caused by ryanodine receptors in the sarcoplasmic reticulum, regulates the membrane potential. In cochlea cells, its number and kinetic properties partly determine the characteristic frequency of each hair cell and thereby helps to establish a tonotopic map. Kinetics of KCNMA1 channels are determined by alternative splicing, phosphorylation status and its combination with modulating beta subunits. Highly sensitive to both iberiotoxin (IbTx) and charybdotoxin (CTX). The chain is Calcium-activated potassium channel subunit alpha-1 (KCNMA1) from Bos taurus (Bovine).